The chain runs to 258 residues: Protein OS-9 homolog (258 aa).

An N-terminal signal peptide occupies residues M1–A18. 3 N-linked (GlcNAc...) asparagine glycosylation sites follow: N2, N51, and N70. The region spanning T114–L237 is the MRH domain. C116 and C132 are joined by a disulfide. A mannooligosaccharide derivative contacts are provided by W127 and Q139. A glycan (N-linked (GlcNAc...) asparagine) is linked at N165. 2 cysteine pairs are disulfide-bonded: C193/C223 and C208/C235. A mannooligosaccharide derivative is bound by residues D194, R200, E219, and Y225.

This sequence belongs to the OS-9 family. Interacts with missfolded ER lumenal proteins.

It localises to the endoplasmic reticulum membrane. Functionally, lectin involved in the quality control of the secretory pathway. As a member of the endoplasmic reticulum-associated degradation lumenal (ERAD-L) surveillance system, targets misfolded endoplasmic reticulum lumenal glycoproteins for degradation. In Candida albicans (strain SC5314 / ATCC MYA-2876) (Yeast), this protein is Protein OS-9 homolog (YOS9).